The sequence spans 686 residues: DNA ligase 1 (686 aa).

Residues Asp35–Asp39, Ser84–Leu85, and Glu119 each bind NAD(+). The N6-AMP-lysine intermediate role is filled by Lys121. Residues Arg142, Glu177, Lys293, and Lys317 each coordinate NAD(+). The Zn(2+) site is built by Cys411, Cys414, Cys429, and Cys434. Residues Arg602 to Pro686 enclose the BRCT domain.

This sequence belongs to the NAD-dependent DNA ligase family. LigA subfamily. Mg(2+) serves as cofactor. Requires Mn(2+) as cofactor.

The catalysed reaction is NAD(+) + (deoxyribonucleotide)n-3'-hydroxyl + 5'-phospho-(deoxyribonucleotide)m = (deoxyribonucleotide)n+m + AMP + beta-nicotinamide D-nucleotide.. Functionally, DNA ligase that catalyzes the formation of phosphodiester linkages between 5'-phosphoryl and 3'-hydroxyl groups in double-stranded DNA using NAD as a coenzyme and as the energy source for the reaction. It is essential for DNA replication and repair of damaged DNA. This chain is DNA ligase 1, found in Deinococcus deserti (strain DSM 17065 / CIP 109153 / LMG 22923 / VCD115).